We begin with the raw amino-acid sequence, 1040 residues long: Beta-galactosidase (1040 aa).

Substrate-binding residues include N111 and D210. Na(+) is bound at residue D210. Residues E427, H429, and E472 each coordinate Mg(2+). Substrate contacts are provided by residues E472 and 548 to 551; that span reads EYAH. E472 serves as the catalytic Proton donor. E548 functions as the Nucleophile in the catalytic mechanism. N608 contacts Mg(2+). Na(+)-binding residues include F612 and D615. Substrate contacts are provided by D615 and W1016.

It belongs to the glycosyl hydrolase 2 family. In terms of assembly, homotetramer. Mg(2+) serves as cofactor. The cofactor is Na(+).

It catalyses the reaction Hydrolysis of terminal non-reducing beta-D-galactose residues in beta-D-galactosides.. This is Beta-galactosidase from Pectobacterium atrosepticum (strain SCRI 1043 / ATCC BAA-672) (Erwinia carotovora subsp. atroseptica).